Consider the following 303-residue polypeptide: MQIYPLRLLPNKIDFDFMNFKKVSYTFSIILSLISFIWIGMYKFNFGIDFAGGIVIEVRLDQTPDLPKMRQVLGELGIGEVVLQNFGSERDLSIRFGSSSEDNLMKNIELIKSTLQNNFPYNFEYRKVDFVGPQVGRQLIEAGTMAMLFSFAAIMIYIWVRFEWYFGLGILIALVHDVILALGFMSITKLDFNLSTIAAVLTIIGYSVNDSVVIYDRIRENLRKYHKKGITEIINLSINETLSRTILTVVTTLLANLALVLFGGEAIRSFSVLVFFGIIAGTYSSIFISAPILTIFANKKFEK.

6 consecutive transmembrane segments (helical) span residues 28 to 48 (SIIL…NFGI), 140 to 160 (IEAG…YIWV), 164 to 184 (WYFG…ALGF), 194 to 214 (LSTI…SVVI), 246 to 266 (ILTV…GGEA), and 272 to 292 (VLVF…SAPI).

It belongs to the SecD/SecF family. SecF subfamily. In terms of assembly, forms a complex with SecD. Part of the essential Sec protein translocation apparatus which comprises SecA, SecYEG and auxiliary proteins SecDF-YajC and YidC.

It localises to the cell inner membrane. Part of the Sec protein translocase complex. Interacts with the SecYEG preprotein conducting channel. SecDF uses the proton motive force (PMF) to complete protein translocation after the ATP-dependent function of SecA. This Rickettsia bellii (strain OSU 85-389) protein is Protein translocase subunit SecF.